A 309-amino-acid polypeptide reads, in one-letter code: D-alanine--D-alanine ligase (309 aa).

Residues 104 to 301 (KQIWQGSDLP…FDALCVEILA (198 aa)) enclose the ATP-grasp domain. Position 130–185 (130–185 (VASLGLPVIIKPVHEGSSIGMSKVEKIEDFAPAIEKATAHDAIVMAEKWITGREYT)) interacts with ATP. Mg(2+) contacts are provided by Asp-255, Glu-268, and Asn-270.

It belongs to the D-alanine--D-alanine ligase family. Mg(2+) is required as a cofactor. The cofactor is Mn(2+).

The protein resides in the cytoplasm. The catalysed reaction is 2 D-alanine + ATP = D-alanyl-D-alanine + ADP + phosphate + H(+). It functions in the pathway cell wall biogenesis; peptidoglycan biosynthesis. Cell wall formation. The chain is D-alanine--D-alanine ligase from Acinetobacter baylyi (strain ATCC 33305 / BD413 / ADP1).